We begin with the raw amino-acid sequence, 297 residues long: 4-hydroxy-tetrahydrodipicolinate synthase (297 aa).

Residue Thr49 coordinates pyruvate. Tyr137 serves as the catalytic Proton donor/acceptor. The active-site Schiff-base intermediate with substrate is the Lys166. Ile208 lines the pyruvate pocket.

It belongs to the DapA family. Homotetramer; dimer of dimers.

The protein resides in the cytoplasm. It catalyses the reaction L-aspartate 4-semialdehyde + pyruvate = (2S,4S)-4-hydroxy-2,3,4,5-tetrahydrodipicolinate + H2O + H(+). It functions in the pathway amino-acid biosynthesis; L-lysine biosynthesis via DAP pathway; (S)-tetrahydrodipicolinate from L-aspartate: step 3/4. In terms of biological role, catalyzes the condensation of (S)-aspartate-beta-semialdehyde [(S)-ASA] and pyruvate to 4-hydroxy-tetrahydrodipicolinate (HTPA). The chain is 4-hydroxy-tetrahydrodipicolinate synthase from Porphyromonas gingivalis (strain ATCC 33277 / DSM 20709 / CIP 103683 / JCM 12257 / NCTC 11834 / 2561).